Reading from the N-terminus, the 937-residue chain is MRCIVSYKSLRSCLVNVPELLLESISEPVQNYAVQAVVCKNDIKKTFYFGISGIPSQFSFEIDSTYAHTLKLAENQEINLSIIDCTHEIEQLEIEPVTSNDWEIAERNAAWLEENLLVQYRVATTERFIIYLPSGTFIQFQPLKLIPSSLCGRLLRTTEVLITPKPNTSAIEVKENRKVNLRCVVENRLLPDSVTADSPALCVFLPLNFPDRPDVVYMDGGNLKSTIVCQCVSCPFQIPGHFFISKSLALSYSIKTGFKFQIWKAHNPPSSSKFILEQKGLPPESNLSSELVAAKLKNSYLMDGMTLKLVDIAVSYSVSGLSGVVKNPIQDIKITSDTNVPVNAGIRNNSPRLSMQPFPHEFAQVRNAVFLHQNIYINGPKGCGKSNLVHSLFDYYSLNSIYFQMIVSCSEIDRSSFAKFQSFWNNVFIQAERYEPSIIYLDDVHCLISSSNENGELGFVEEREIAFLQHQIINLKRKRKIIFIGFGEEFLTFSENLVLPLLFQIKIALPSLAVTRRKEILTTIFQENFSDITMDSIEFISVKTEGYLMTDLVLFVKRLLSEAFVEKIQNGPKHLMNKGLIEKTLKDFVPLQLRKAKFVKSSIRWIDIAGMQEAKEAVRDIIESPVKYSLIYKQCRLRLPTGILLFGYPGCGKTYLASAISSTFPVQFISIKGPELLDKYIGKSEQGVRDLFSRAQMAKPCVLFFDEFDSVAPRRGQDSTGVTDRVVNQILTQMDGAESLDGVYIVAATTRPDMIDPALLRPGRLDKLIFCDLPNEEERLEVLQKLANRFHIENAAMLKKLSTLTDGYTYADLSSLLYDAHLIAVHKLLKRVSINAVDPSQTTSSFTNLTTESKRNASMLALPPESRYNQNMQSMSDSKSVVIEDYMLMEALKKNSPSLNSEEFEHLSNLYRDFRSKLFEPELNARNTDVGSKTRQI.

Residues 379–386 and 647–654 each bind ATP; these read GPKGCGKS and GYPGCGKT.

Belongs to the AAA ATPase family. Interacts with pex6; forming the pex1-pex6 AAA ATPase complex, which is composed of a heterohexamer formed by a trimer of pex1-pex6 dimers.

It localises to the cytoplasm. The protein localises to the cytosol. It is found in the peroxisome membrane. The enzyme catalyses ATP + H2O = ADP + phosphate + H(+). Functionally, component of the pex1-pex6 AAA ATPase complex, a protein dislocase complex that mediates the ATP-dependent extraction of the pex5 receptor from peroxisomal membranes, an essential step for pex5 recycling. Specifically recognizes pex5 monoubiquitinated at 'Cys-6', and pulls it out of the peroxisome lumen through the pex2-pex10-pex12 retrotranslocation channel. Extraction by the pex1-pex6 AAA ATPase complex is accompanied by unfolding of the TPR repeats and release of bound cargo from pex5. The protein is Peroxisomal ATPase pex1 (pex1) of Schizosaccharomyces pombe (strain 972 / ATCC 24843) (Fission yeast).